The sequence spans 73 residues: Putative membrane protein insertion efficiency factor (73 aa).

This sequence belongs to the UPF0161 family.

The protein resides in the cell inner membrane. Its function is as follows. Could be involved in insertion of integral membrane proteins into the membrane. This Treponema denticola (strain ATCC 35405 / DSM 14222 / CIP 103919 / JCM 8153 / KCTC 15104) protein is Putative membrane protein insertion efficiency factor.